We begin with the raw amino-acid sequence, 113 residues long: Hydrogenase maturation factor HypA (113 aa).

H2 serves as a coordination point for Ni(2+). Residues C73, C76, C89, and C92 each coordinate Zn(2+).

It belongs to the HypA/HybF family.

Functionally, involved in the maturation of [NiFe] hydrogenases. Required for nickel insertion into the metal center of the hydrogenase. This chain is Hydrogenase maturation factor HypA, found in Actinobacillus succinogenes (strain ATCC 55618 / DSM 22257 / CCUG 43843 / 130Z).